A 414-amino-acid polypeptide reads, in one-letter code: ORC1-type DNA replication protein 11 (414 aa).

ATP is bound by residues 60 to 64 (VGKTA), Tyr207, and Arg219.

This sequence belongs to the CDC6/cdc18 family.

Involved in regulation of DNA replication. In Haloarcula marismortui (strain ATCC 43049 / DSM 3752 / JCM 8966 / VKM B-1809) (Halobacterium marismortui), this protein is ORC1-type DNA replication protein 11 (cdc6k).